We begin with the raw amino-acid sequence, 95 residues long: Aspartyl/glutamyl-tRNA(Asn/Gln) amidotransferase subunit C (95 aa).

The protein belongs to the GatC family. In terms of assembly, heterotrimer of A, B and C subunits.

It carries out the reaction L-glutamyl-tRNA(Gln) + L-glutamine + ATP + H2O = L-glutaminyl-tRNA(Gln) + L-glutamate + ADP + phosphate + H(+). It catalyses the reaction L-aspartyl-tRNA(Asn) + L-glutamine + ATP + H2O = L-asparaginyl-tRNA(Asn) + L-glutamate + ADP + phosphate + 2 H(+). Its function is as follows. Allows the formation of correctly charged Asn-tRNA(Asn) or Gln-tRNA(Gln) through the transamidation of misacylated Asp-tRNA(Asn) or Glu-tRNA(Gln) in organisms which lack either or both of asparaginyl-tRNA or glutaminyl-tRNA synthetases. The reaction takes place in the presence of glutamine and ATP through an activated phospho-Asp-tRNA(Asn) or phospho-Glu-tRNA(Gln). This is Aspartyl/glutamyl-tRNA(Asn/Gln) amidotransferase subunit C from Hydrogenovibrio crunogenus (strain DSM 25203 / XCL-2) (Thiomicrospira crunogena).